The primary structure comprises 113 residues: Ig heavy chain V-III region E109 (113 aa).

The Ig-like domain occupies Glu1 to Val113. Residues Cys22 and Cys98 are joined by a disulfide bond.

This chain is Ig heavy chain V-III region E109, found in Mus musculus (Mouse).